The following is a 509-amino-acid chain: Methionine--tRNA ligase (509 aa).

Positions 12–22 match the 'HIGH' region motif; the sequence is YYVNDVPHIGH. Positions 295–299 match the 'KMSKS' region motif; it reads KISKS. An ATP-binding site is contributed by K298.

It belongs to the class-I aminoacyl-tRNA synthetase family. MetG type 2B subfamily. In terms of assembly, monomer.

It is found in the cytoplasm. The catalysed reaction is tRNA(Met) + L-methionine + ATP = L-methionyl-tRNA(Met) + AMP + diphosphate. In terms of biological role, is required not only for elongation of protein synthesis but also for the initiation of all mRNA translation through initiator tRNA(fMet) aminoacylation. This Rickettsia bellii (strain RML369-C) protein is Methionine--tRNA ligase.